A 664-amino-acid chain; its full sequence is UvrABC system protein B (664 aa).

The region spanning 25–170 is the Helicase ATP-binding domain; it reads NSILLGNKYQ…FVGQRISIKE (146 aa). 38–45 is an ATP binding site; the sequence is GVTGSGKT. Positions 91–114 match the Beta-hairpin motif; the sequence is YYDYYQPESYVPSKDLFIEKEATI. The Helicase C-terminal domain occupies 429–595; the sequence is QMEDLYIEIQ…TIVKKIQNIL (167 aa). The UVR domain maps to 622–657; the sequence is KKLIDKLKFELEEAVNDERFEDAIVLRDKIKELGSK.

Belongs to the UvrB family. In terms of assembly, forms a heterotetramer with UvrA during the search for lesions. Interacts with UvrC in an incision complex.

It localises to the cytoplasm. In terms of biological role, the UvrABC repair system catalyzes the recognition and processing of DNA lesions. A damage recognition complex composed of 2 UvrA and 2 UvrB subunits scans DNA for abnormalities. Upon binding of the UvrA(2)B(2) complex to a putative damaged site, the DNA wraps around one UvrB monomer. DNA wrap is dependent on ATP binding by UvrB and probably causes local melting of the DNA helix, facilitating insertion of UvrB beta-hairpin between the DNA strands. Then UvrB probes one DNA strand for the presence of a lesion. If a lesion is found the UvrA subunits dissociate and the UvrB-DNA preincision complex is formed. This complex is subsequently bound by UvrC and the second UvrB is released. If no lesion is found, the DNA wraps around the other UvrB subunit that will check the other stand for damage. The chain is UvrABC system protein B from Borreliella afzelii (strain PKo) (Borrelia afzelii).